The primary structure comprises 86 residues: Large ribosomal subunit protein bL31B (86 aa).

The protein belongs to the bacterial ribosomal protein bL31 family. Type B subfamily. Part of the 50S ribosomal subunit.

In Burkholderia cenocepacia (strain ATCC BAA-245 / DSM 16553 / LMG 16656 / NCTC 13227 / J2315 / CF5610) (Burkholderia cepacia (strain J2315)), this protein is Large ribosomal subunit protein bL31B.